The primary structure comprises 362 residues: Chorismate synthase (362 aa).

NADP(+)-binding residues include R48 and R54. Residues R125–S127, N237–A238, G277, K292–S296, and R318 contribute to the FMN site.

It belongs to the chorismate synthase family. As to quaternary structure, homotetramer. It depends on FMNH2 as a cofactor.

The enzyme catalyses 5-O-(1-carboxyvinyl)-3-phosphoshikimate = chorismate + phosphate. Its pathway is metabolic intermediate biosynthesis; chorismate biosynthesis; chorismate from D-erythrose 4-phosphate and phosphoenolpyruvate: step 7/7. In terms of biological role, catalyzes the anti-1,4-elimination of the C-3 phosphate and the C-6 proR hydrogen from 5-enolpyruvylshikimate-3-phosphate (EPSP) to yield chorismate, which is the branch point compound that serves as the starting substrate for the three terminal pathways of aromatic amino acid biosynthesis. This reaction introduces a second double bond into the aromatic ring system. The protein is Chorismate synthase of Idiomarina loihiensis (strain ATCC BAA-735 / DSM 15497 / L2-TR).